The chain runs to 200 residues: Transcriptional repressor NrdR (200 aa).

A zinc finger lies at 3 to 34 (CPFCQNPDTKVIDTRISDDGHSIRRRRECPNC). An ATP-cone domain is found at 46–136 (LLVKKRSGNV…VYQNFEDLED (91 aa)).

Belongs to the NrdR family. Zn(2+) serves as cofactor.

Its function is as follows. Negatively regulates transcription of bacterial ribonucleotide reductase nrd genes and operons by binding to NrdR-boxes. The chain is Transcriptional repressor NrdR from Bifidobacterium animalis subsp. lactis (strain AD011).